A 167-amino-acid chain; its full sequence is Signal peptidase complex catalytic subunit SEC11 (167 aa).

Residues M1–K9 lie on the Cytoplasmic side of the membrane. Residues L10–A30 form a helical; Signal-anchor for type II membrane protein membrane-spanning segment. The Lumenal portion of the chain corresponds to T31–E167. Catalysis depends on charge relay system residues S44, H83, and D109. N121 carries an N-linked (GlcNAc...) asparagine glycan. The interval A153 to L164 is C-terminal short (CTS) helix.

It belongs to the peptidase S26B family. As to quaternary structure, component of the signal peptidase complex (SPC) composed of a catalytic subunit SEC11 and three accessory subunits SPC1, SPC2 and SPC3. The complex induces a local thinning of the ER membrane which is used to measure the length of the signal peptide (SP) h-region of protein substrates. This ensures the selectivity of the complex towards h-regions shorter than 18-20 amino acids. SPC associates with the translocon complex.

The protein localises to the endoplasmic reticulum membrane. It catalyses the reaction Cleavage of hydrophobic, N-terminal signal or leader sequences from secreted and periplasmic proteins.. Catalytic component of the signal peptidase complex (SPC) which catalyzes the cleavage of N-terminal signal sequences from nascent proteins as they are translocated into the lumen of the endoplasmic reticulum. Specifically cleaves N-terminal signal peptides that contain a hydrophobic alpha-helix (h-region) shorter than 18-20 amino acids. The sequence is that of Signal peptidase complex catalytic subunit SEC11 (SEC11) from Saccharomyces cerevisiae (strain Lalvin QA23) (Baker's yeast).